Here is a 467-residue protein sequence, read N- to C-terminus: Mitochondrial adenyl nucleotide antiporter SLC25A23 (467 aa).

Residues 1–148 form a regulatory N-terminal domain region; the sequence is MRGGSSDAER…DHFLLHSLEN (148 aa). Residues 1–187 are Mitochondrial intermembrane-facing; it reads MRGGSSDAER…EKLTGMWWKQ (187 aa). EF-hand domains are found at residues 9-44, 76-111, and 112-147; these read ERRQ…LGRG, EREQ…LGIS, and ISLE…HSLE. Ca(2+)-binding residues include Asp22, Asn24, Asp26, Arg28, and Glu33. The disordered stretch occupies residues 39-61; it reads ARLGRGDPDRAQQGVSSDWDADP. Residues Asp89, Asn91, Asp93, His95, and Glu100 each coordinate Ca(2+). The interval 149 to 158 is linker region; sequence VEDVLYFWKH. The C-terminal transmembrane transporter domain stretch occupies residues 164–467; it reads IGECLTVPDE…MKQALGVTSR (304 aa). 3 Solcar repeats span residues 182 to 268, 276 to 361, and 373 to 461; these read GMWW…IKRA, LHVQ…LKNR, and PGIL…MKQA. The helical transmembrane segment at 188 to 205 threads the bilayer; it reads LVAGAVAGAVSRTGTAPL. Over 206–242 the chain is Mitochondrial matrix; sequence DRLKVFMQVHASKSNRLNILGGLRNMIQEGGVLSLWR. Residues 243–262 traverse the membrane as a helical segment; that stretch reads GNGINVLKIAPESAIKFMAY. The Mitochondrial intermembrane segment spans residues 263–285; it reads EQIKRAIRGQQETLHVQERFVAG. Residues 286 to 299 form a helical membrane-spanning segment; the sequence is SLAGATAQTIIYPM. Over 300 to 335 the chain is Mitochondrial matrix; that stretch reads EVLKTRLTLRRTGQYKGLLDCAKRILEREGPRAFYR. Residues 336–355 traverse the membrane as a helical segment; sequence GYLPNVLGIIPYAGIDLAVY. Over 356 to 378 the chain is Mitochondrial intermembrane; the sequence is ETLKNRWLQQYSHESANPGILVL. The helical transmembrane segment at 379 to 396 threads the bilayer; that stretch reads LGCGTISSTCGQIASYPL. At 397 to 435 the chain is on the mitochondrial matrix side; the sequence is ALVRTRMQAQASIEGGPQVSMVGLLRHILSQEGVWGLYR. A helical transmembrane segment spans residues 436–455; it reads GIAPNFMKVIPAVSISYVVY. At 456 to 467 the chain is on the mitochondrial intermembrane side; sequence ENMKQALGVTSR.

It belongs to the mitochondrial carrier (TC 2.A.29) family. In terms of assembly, interacts with MCU. Interacts with MICU1.

The protein resides in the mitochondrion inner membrane. It catalyses the reaction Mg(2+)(out) + phosphate(in) + ATP(out) = Mg(2+)(in) + phosphate(out) + ATP(in). The catalysed reaction is ADP(out) + phosphate(in) + H(+)(out) = ADP(in) + phosphate(out) + H(+)(in). The enzyme catalyses AMP(out) + phosphate(in) = AMP(in) + phosphate(out). It carries out the reaction phosphate(in) + ATP(out) + 2 H(+)(out) = phosphate(out) + ATP(in) + 2 H(+)(in). It catalyses the reaction dADP(in) + ADP(out) = dADP(out) + ADP(in). The catalysed reaction is Mg(2+)(in) + ADP(out) + ATP(in) + H(+)(out) = Mg(2+)(out) + ADP(in) + ATP(out) + H(+)(in). The enzyme catalyses ADP(out) + diphosphate(in) = ADP(in) + diphosphate(out). It carries out the reaction dAMP(in) + ADP(out) + H(+)(out) = dAMP(out) + ADP(in) + H(+)(in). It catalyses the reaction 3'-AMP(in) + ADP(out) + H(+)(out) = 3'-AMP(out) + ADP(in) + H(+)(in). The catalysed reaction is dAMP(out) + phosphate(in) = dAMP(in) + phosphate(out). The enzyme catalyses 3'-AMP(out) + phosphate(in) = 3'-AMP(in) + phosphate(out). It carries out the reaction dADP(out) + phosphate(in) + H(+)(out) = dADP(in) + phosphate(out) + H(+)(in). Activated by an increase in cytosolic calcium levels that induce a conformational change of the N-terminal regulatory domain, uncapping the channel and allowing transport. Its function is as follows. Electroneutral antiporter that mediates the transport of adenine nucleotides through the inner mitochondrial membrane. Originally identified as an ATP-magnesium/inorganic phosphate antiporter, it also acts as a broad specificity adenyl nucleotide antiporter. By regulating the mitochondrial matrix adenine nucleotide pool could adapt to changing cellular energetic demands and indirectly regulate adenine nucleotide-dependent metabolic pathways. Also acts as a regulator of mitochondrial calcium uptake and can probably transport trace amounts of other divalent metal cations in complex with ATP. In vitro, a low activity is also observed with guanyl and pyrimidine nucleotides. This is Mitochondrial adenyl nucleotide antiporter SLC25A23 from Mus musculus (Mouse).